Consider the following 152-residue polypeptide: Small ribosomal subunit protein uS11B (152 aa).

Residues Glu-131 to Leu-152 form a disordered region. Over residues Arg-143–Leu-152 the composition is skewed to basic residues.

This sequence belongs to the universal ribosomal protein uS11 family.

This chain is Small ribosomal subunit protein uS11B, found in Anopheles gambiae (African malaria mosquito).